Reading from the N-terminus, the 662-residue chain is UvrABC system protein B (662 aa).

The 158-residue stretch at 25-182 (KGIEKREKFQ…KKLVEIQYER (158 aa)) folds into the Helicase ATP-binding domain. 38–45 (GVTGSGKT) is a binding site for ATP. The Beta-hairpin signature appears at 91 to 114 (YYDYYQPEAYVAQSDTYIEKDASI). The Helicase C-terminal domain occupies 429–595 (QIDDLYTSIQ…TIIKDIREVI (167 aa)). The UVR domain maps to 622-657 (DKLIEKYEEEMKEAAQNLQFEKAAHLRDVIYKLKKD).

Belongs to the UvrB family. Forms a heterotetramer with UvrA during the search for lesions. Interacts with UvrC in an incision complex.

The protein localises to the cytoplasm. Its function is as follows. The UvrABC repair system catalyzes the recognition and processing of DNA lesions. A damage recognition complex composed of 2 UvrA and 2 UvrB subunits scans DNA for abnormalities. Upon binding of the UvrA(2)B(2) complex to a putative damaged site, the DNA wraps around one UvrB monomer. DNA wrap is dependent on ATP binding by UvrB and probably causes local melting of the DNA helix, facilitating insertion of UvrB beta-hairpin between the DNA strands. Then UvrB probes one DNA strand for the presence of a lesion. If a lesion is found the UvrA subunits dissociate and the UvrB-DNA preincision complex is formed. This complex is subsequently bound by UvrC and the second UvrB is released. If no lesion is found, the DNA wraps around the other UvrB subunit that will check the other stand for damage. This is UvrABC system protein B from Clostridium botulinum (strain Kyoto / Type A2).